The chain runs to 287 residues: ATP synthase gamma chain (287 aa).

The protein belongs to the ATPase gamma chain family. F-type ATPases have 2 components, CF(1) - the catalytic core - and CF(0) - the membrane proton channel. CF(1) has five subunits: alpha(3), beta(3), gamma(1), delta(1), epsilon(1). CF(0) has three main subunits: a, b and c.

It is found in the cell inner membrane. Produces ATP from ADP in the presence of a proton gradient across the membrane. The gamma chain is believed to be important in regulating ATPase activity and the flow of protons through the CF(0) complex. This Ruthia magnifica subsp. Calyptogena magnifica protein is ATP synthase gamma chain.